The primary structure comprises 556 residues: Oxygen-dependent choline dehydrogenase (556 aa).

Residue 4-33 participates in FAD binding; it reads DYIIIGAGSAGNVLATRLTEDPNTTVLLLE. The active-site Proton acceptor is H473.

This sequence belongs to the GMC oxidoreductase family. The cofactor is FAD.

It catalyses the reaction choline + A = betaine aldehyde + AH2. The catalysed reaction is betaine aldehyde + NAD(+) + H2O = glycine betaine + NADH + 2 H(+). It participates in amine and polyamine biosynthesis; betaine biosynthesis via choline pathway; betaine aldehyde from choline (cytochrome c reductase route): step 1/1. Functionally, involved in the biosynthesis of the osmoprotectant glycine betaine. Catalyzes the oxidation of choline to betaine aldehyde and betaine aldehyde to glycine betaine at the same rate. This Escherichia coli O127:H6 (strain E2348/69 / EPEC) protein is Oxygen-dependent choline dehydrogenase.